Here is a 326-residue protein sequence, read N- to C-terminus: Zinc transporter 11 (326 aa).

Positions Met1–Ser20 are cleaved as a signal peptide. At His21–Lys49 the chain is on the extracellular side. A helical transmembrane segment spans residues Ile50–Leu70. Topologically, residues Lys71–Gly75 are cytoplasmic. A helical transmembrane segment spans residues Phe76 to Phe96. Over Leu97–Pro121 the chain is Extracellular. Residues Phe122–Ala142 form a helical membrane-spanning segment. Residues His143–Ser174 lie on the Cytoplasmic side of the membrane. The helical transmembrane segment at Ile175–Ser195 threads the bilayer. The Extracellular segment spans residues Glu196–Arg203. A helical transmembrane segment spans residues Ala204 to Leu224. Residues Arg225–Ser235 lie on the Cytoplasmic side of the membrane. Residues Ile236–Ile256 traverse the membrane as a helical segment. The Extracellular portion of the chain corresponds to Asp257–Gly262. The helical transmembrane segment at Ser263 to Val283 threads the bilayer. The Cytoplasmic segment spans residues Ser284–Arg305. Residues Tyr306–Thr326 form a helical membrane-spanning segment.

The protein belongs to the ZIP transporter (TC 2.A.5) family.

It is found in the cell membrane. Functionally, probably mediates zinc uptake from the rhizosphere. This Arabidopsis thaliana (Mouse-ear cress) protein is Zinc transporter 11 (ZIP11).